A 424-amino-acid polypeptide reads, in one-letter code: ATP-sensitive inward rectifier potassium channel 8 (424 aa).

Residues 1 to 69 (MLARKSIIPE…IFTTLVDLKW (69 aa)) are Cytoplasmic-facing. The residue at position 6 (serine 6) is a Phosphoserine. A helical membrane pass occupies residues 70 to 94 (RHTLVIFTMSFLCSWLLFAIMWWLV). Topologically, residues 95 to 126 (AFAHGDIYAYMEKGITEKSGLESAVCVTNVRS) are extracellular. The helical; Pore-forming intramembrane region spans 127–138 (FTSAFLFSIEVQ). The pore-forming intramembrane region spans 139–145 (VTIGFGG). The Selectivity filter motif lies at 140 to 145 (TIGFGG). Topologically, residues 146-154 (RMMTEECPL) are extracellular. The helical transmembrane segment at 155–176 (AITVLILQNIVGLIINAVMLGC) threads the bilayer. Topologically, residues 177–424 (IFMKTAQAHR…PEGNQCPSES (248 aa)) are cytoplasmic. The segment at 374–424 (LSHQNSLRKRNSMRRNNSMRRSNSIRRNNSSLMVPKVQFMTPEGNQCPSES) is disordered. A compositionally biased stretch (low complexity) spans 387–404 (RRNNSMRRSNSIRRNNSS).

Belongs to the inward rectifier-type potassium channel (TC 1.A.2.1) family. KCNJ8 subfamily. Interacts with ABCC9. In terms of tissue distribution, widely expressed, including in pancreatic islets, pituitary, skeletal muscle and heart.

Its subcellular location is the membrane. The enzyme catalyses K(+)(in) = K(+)(out). Its function is as follows. Inward rectifier potassium channels are characterized by a greater tendency to allow potassium to flow into the cell rather than out of it. Their voltage dependence is regulated by the concentration of extracellular potassium; as external potassium is raised, the voltage range of the channel opening shifts to more positive voltages. The inward rectification is mainly due to the blockage of outward current by internal magnesium. This channel is activated by internal ATP and can be blocked by external barium. Can form a sulfonyllurea-sensitive but ATP-insensitive potassium channel with ABCC9. This is ATP-sensitive inward rectifier potassium channel 8 (Kcnj8) from Rattus norvegicus (Rat).